The chain runs to 1007 residues: Aldehyde reductase lnbA (1007 aa).

Positions 35-428 (QVRQSPSSIA…GRVDHQIKVR (394 aa)) are adenylation (A) domain. The 78-residue stretch at 540–617 (TLCQDTQTVL…ALASIIDHAK (78 aa)) folds into the Carrier domain. The residue at position 577 (Ser577) is an O-(pantetheine 4'-phosphoryl)serine. The tract at residues 659 to 998 (IFITGATGFV…PTLDCSLLKK (340 aa)) is short-chain dehydrogenase/reductase (R) domain.

This sequence belongs to the NRP synthetase family.

The enzyme catalyses L-tyrosinal + AMP + diphosphate + NADP(+) = L-tyrosine + ATP + NADPH + H(+). It functions in the pathway secondary metabolite biosynthesis. Functionally, non-canonical nonribosomal peptide synthetase; part of the lnb gene cluster that mediates the biosynthesis of diastereomeric piperazines. Lna and lnb clusters encode sets of enzymes that produce overlapping sets of previously undescribed metabolites such as piperazinomycin-like metabolites or morpholine. The lna and lnb biosynthetic pathways appear to be part of a signaling network that controls the formation of sclerotia, a resilient overwintering structure. One primary function of the non-canonical nonribosomal peptide synthetases lnaA and lnbA consists in the reduction of L-tyrosine. The presence in the clusters of tailoring enzymes such as the oxidoreductases lnaB, lnbB, lnaE or lnbE, as well as of the cytochrome P450 monooxygenases lnaC, lnaD, or lnbC, might explain formation of various diastereomeric piperazines. The chain is Aldehyde reductase lnbA from Aspergillus flavus (strain ATCC 200026 / FGSC A1120 / IAM 13836 / NRRL 3357 / JCM 12722 / SRRC 167).